The sequence spans 1320 residues: Probable inactive ATP-dependent zinc metalloprotease FTSHI 5, chloroplastic (1320 aa).

The transit peptide at 1–43 (MDFISASSLSSPFSTQLSPIYLSSGIVSLKPRHRVKNRNFGSR) directs the protein to the chloroplast. 3 helical membrane passes run 571–591 (LYLK…WIPM), 633–653 (NIND…IIPY), and 695–715 (FQWF…LYHV). 824–831 (GERGTGKT) serves as a coordination point for ATP.

This sequence in the N-terminal section; belongs to the AAA ATPase family. The protein in the C-terminal section; belongs to the peptidase M41 family. As to quaternary structure, oligomer.

It localises to the plastid. Its subcellular location is the chloroplast membrane. In terms of biological role, required for plastid development during embryogenesis. Might be involved in chaperone functions or play a structural role in the thylakoid FtsH complex. The chain is Probable inactive ATP-dependent zinc metalloprotease FTSHI 5, chloroplastic from Arabidopsis thaliana (Mouse-ear cress).